Here is a 350-residue protein sequence, read N- to C-terminus: Histidinol-phosphate aminotransferase 2 (350 aa).

Lys210 carries the post-translational modification N6-(pyridoxal phosphate)lysine.

Belongs to the class-II pyridoxal-phosphate-dependent aminotransferase family. Histidinol-phosphate aminotransferase subfamily. In terms of assembly, homodimer. The cofactor is pyridoxal 5'-phosphate.

The enzyme catalyses L-histidinol phosphate + 2-oxoglutarate = 3-(imidazol-4-yl)-2-oxopropyl phosphate + L-glutamate. It participates in amino-acid biosynthesis; L-histidine biosynthesis; L-histidine from 5-phospho-alpha-D-ribose 1-diphosphate: step 7/9. The chain is Histidinol-phosphate aminotransferase 2 from Mannheimia succiniciproducens (strain KCTC 0769BP / MBEL55E).